The sequence spans 598 residues: Transcription factor cpaR (598 aa).

A DNA-binding region (zn(2)-C6 fungal-type) is located at residues Cys22–Cys51.

The protein resides in the nucleus. In terms of biological role, transcription factor; part of the gene cluster that mediates the biosynthesis of the fungal neurotoxin cyclopiazonic acid (CPA), a nanomolar inhibitor of Ca(2+)-ATPase with a unique pentacyclic indole tetramic acid scaffold. The chain is Transcription factor cpaR from Aspergillus oryzae (Yellow koji mold).